The chain runs to 479 residues: Adenosylhomocysteinase (479 aa).

Substrate is bound by residues Thr-65, Asp-145, and Glu-205. 206-208 provides a ligand contact to NAD(+); that stretch reads TTT. Substrate-binding residues include Lys-235 and Asp-239. NAD(+) contacts are provided by residues Asn-240, 269–274, Glu-292, Asn-327, 348–350, and Asn-393; these read GYGDVG and IGH.

Belongs to the adenosylhomocysteinase family. The cofactor is NAD(+).

The protein resides in the cytoplasm. The enzyme catalyses S-adenosyl-L-homocysteine + H2O = L-homocysteine + adenosine. The protein operates within amino-acid biosynthesis; L-homocysteine biosynthesis; L-homocysteine from S-adenosyl-L-homocysteine: step 1/1. Functionally, may play a key role in the regulation of the intracellular concentration of adenosylhomocysteine. In Herminiimonas arsenicoxydans, this protein is Adenosylhomocysteinase.